The following is a 72-amino-acid chain: Translation initiation factor IF-1 (72 aa).

The 71-residue stretch at 2–72 folds into the S1-like domain; sequence AKEDVIEIQG…TKGRITYRFK (71 aa).

It belongs to the IF-1 family. Component of the 30S ribosomal translation pre-initiation complex which assembles on the 30S ribosome in the order IF-2 and IF-3, IF-1 and N-formylmethionyl-tRNA(fMet); mRNA recruitment can occur at any time during PIC assembly.

Its subcellular location is the cytoplasm. In terms of biological role, one of the essential components for the initiation of protein synthesis. Stabilizes the binding of IF-2 and IF-3 on the 30S subunit to which N-formylmethionyl-tRNA(fMet) subsequently binds. Helps modulate mRNA selection, yielding the 30S pre-initiation complex (PIC). Upon addition of the 50S ribosomal subunit IF-1, IF-2 and IF-3 are released leaving the mature 70S translation initiation complex. This Lactiplantibacillus plantarum (strain ATCC BAA-793 / NCIMB 8826 / WCFS1) (Lactobacillus plantarum) protein is Translation initiation factor IF-1.